A 375-amino-acid polypeptide reads, in one-letter code: Methylthioribose-1-phosphate isomerase (375 aa).

Asp257 serves as the catalytic Proton donor.

It belongs to the eIF-2B alpha/beta/delta subunits family. MtnA subfamily.

The protein localises to the cytoplasm. It is found in the nucleus. The catalysed reaction is 5-(methylsulfanyl)-alpha-D-ribose 1-phosphate = 5-(methylsulfanyl)-D-ribulose 1-phosphate. The protein operates within amino-acid biosynthesis; L-methionine biosynthesis via salvage pathway; L-methionine from S-methyl-5-thio-alpha-D-ribose 1-phosphate: step 1/6. Its function is as follows. Catalyzes the interconversion of methylthioribose-1-phosphate (MTR-1-P) into methylthioribulose-1-phosphate (MTRu-1-P). In Leishmania major, this protein is Methylthioribose-1-phosphate isomerase.